The chain runs to 373 residues: tRNA-specific 2-thiouridylase MnmA (373 aa).

Residues 18–25 (AMSGGVDS) and leucine 44 contribute to the ATP site. The active-site Nucleophile is cysteine 117. The cysteines at positions 117 and 214 are disulfide-linked. An ATP-binding site is contributed by glycine 141. The interval 163–165 (RDQ) is interaction with tRNA. Catalysis depends on cysteine 214, which acts as the Cysteine persulfide intermediate.

The protein belongs to the MnmA/TRMU family.

The protein localises to the cytoplasm. The catalysed reaction is S-sulfanyl-L-cysteinyl-[protein] + uridine(34) in tRNA + AH2 + ATP = 2-thiouridine(34) in tRNA + L-cysteinyl-[protein] + A + AMP + diphosphate + H(+). Functionally, catalyzes the 2-thiolation of uridine at the wobble position (U34) of tRNA, leading to the formation of s(2)U34. The protein is tRNA-specific 2-thiouridylase MnmA of Paramagnetospirillum magneticum (strain ATCC 700264 / AMB-1) (Magnetospirillum magneticum).